A 377-amino-acid chain; its full sequence is Nitric oxide reductase FlRd-NAD(+) reductase (377 aa).

This sequence belongs to the FAD-dependent oxidoreductase family. FAD is required as a cofactor.

It is found in the cytoplasm. The enzyme catalyses 2 reduced [nitric oxide reductase rubredoxin domain] + NAD(+) + H(+) = 2 oxidized [nitric oxide reductase rubredoxin domain] + NADH. It participates in nitrogen metabolism; nitric oxide reduction. In terms of biological role, one of at least two accessory proteins for anaerobic nitric oxide (NO) reductase. Reduces the rubredoxin moiety of NO reductase. This Salmonella gallinarum (strain 287/91 / NCTC 13346) protein is Nitric oxide reductase FlRd-NAD(+) reductase.